We begin with the raw amino-acid sequence, 251 residues long: ATP synthase subunit a (251 aa).

5 helical membrane passes run 34-54 (VFLTSWFVIGVLVLASVAASS), 93-113 (FVGTLFLFIFVSNWSGALVPF), 130-150 (INTTVALALLTSLAYFYAGFS), 195-215 (LVVGVLVLLVPLFVPLPVMAL), and 216-236 (GLFTSAIQALIFATLAAAYIG).

Belongs to the ATPase A chain family. F-type ATPases have 2 components, CF(1) - the catalytic core - and CF(0) - the membrane proton channel. CF(1) has five subunits: alpha(3), beta(3), gamma(1), delta(1), epsilon(1). CF(0) has four main subunits: a, b, b' and c.

It localises to the cellular thylakoid membrane. Its function is as follows. Key component of the proton channel; it plays a direct role in the translocation of protons across the membrane. This is ATP synthase subunit a from Nostoc sp. (strain PCC 7120 / SAG 25.82 / UTEX 2576).